A 463-amino-acid chain; its full sequence is Argininosuccinate lyase (463 aa).

This sequence belongs to the lyase 1 family. Argininosuccinate lyase subfamily.

The protein resides in the cytoplasm. It catalyses the reaction 2-(N(omega)-L-arginino)succinate = fumarate + L-arginine. The protein operates within amino-acid biosynthesis; L-arginine biosynthesis; L-arginine from L-ornithine and carbamoyl phosphate: step 3/3. This chain is Argininosuccinate lyase, found in Streptococcus pneumoniae (strain JJA).